The chain runs to 234 residues: UDP-2,3-diacylglucosamine hydrolase (234 aa).

Mn(2+)-binding residues include D9, H11, D42, N80, and H115. Residue 80–81 (NR) participates in substrate binding. Positions 123, 161, 165, 168, and 196 each coordinate substrate. Mn(2+) contacts are provided by H196 and H198.

The protein belongs to the LpxH family. The cofactor is Mn(2+).

Its subcellular location is the cell inner membrane. It carries out the reaction UDP-2-N,3-O-bis[(3R)-3-hydroxytetradecanoyl]-alpha-D-glucosamine + H2O = 2-N,3-O-bis[(3R)-3-hydroxytetradecanoyl]-alpha-D-glucosaminyl 1-phosphate + UMP + 2 H(+). It participates in glycolipid biosynthesis; lipid IV(A) biosynthesis; lipid IV(A) from (3R)-3-hydroxytetradecanoyl-[acyl-carrier-protein] and UDP-N-acetyl-alpha-D-glucosamine: step 4/6. In terms of biological role, hydrolyzes the pyrophosphate bond of UDP-2,3-diacylglucosamine to yield 2,3-diacylglucosamine 1-phosphate (lipid X) and UMP by catalyzing the attack of water at the alpha-P atom. Involved in the biosynthesis of lipid A, a phosphorylated glycolipid that anchors the lipopolysaccharide to the outer membrane of the cell. The protein is UDP-2,3-diacylglucosamine hydrolase of Histophilus somni (strain 2336) (Haemophilus somnus).